A 257-amino-acid polypeptide reads, in one-letter code: Transmembrane protein 101 (257 aa).

Helical transmembrane passes span 21–40 (VLLTRCPFWGCFSQLMLYAE), 52–72 (VPYLYFDMGAAVLCASFMSFG), 77–97 (WFALGAALQLAISTYAAYIGG), 110–130 (YSRTVAIIGGFLVLASGAGEL), 139–159 (SLQSTGQVFLGIYLICVAYSL), 182–202 (LFFVLYGVLALAFLSGYYVTL), 206–226 (ILAVLLPPVMLLIDGNVAYWH), and 233–253 (FWNQMKLLGESVGIFGTAVIL).

It localises to the membrane. Its function is as follows. May activate NF-kappa-B signaling pathways. The protein is Transmembrane protein 101 (TMEM101) of Pongo abelii (Sumatran orangutan).